Consider the following 1088-residue polypeptide: Receptor-type guanylate cyclase gcy-17 (1088 aa).

The first 20 residues, 1–20, serve as a signal peptide directing secretion; the sequence is MLFLRLFIFTPFLILANCQA. The Extracellular portion of the chain corresponds to 21-480; sequence RRTIKVGLLF…PPDFVRDYLV (460 aa). N-linked (GlcNAc...) asparagine glycans are attached at residues N33, N235, N251, N321, N381, N419, and N434. Residues 481-501 traverse the membrane as a helical segment; that stretch reads IVIIIVMFLIFAVSAAVGAVF. At 502–1088 the chain is on the cytoplasmic side; the sequence is YAIRQKRKEI…SMARSITPEI (587 aa). The interval 529–552 is disordered; sequence SKKSKSEASQRSFASGPSTSTKLT. Polar residues predominate over residues 535-552; the sequence is EASQRSFASGPSTSTKLT. Residues 535-824 enclose the Protein kinase domain; the sequence is EASQRSFASG…KGNLMDHVFN (290 aa). Positions 826-854 form a coiled coil; the sequence is LETYASTLEEEVNERTKELVEEQKKSDVL. Residues 882–1012 form the Guanylate cyclase domain; that stretch reads TIFFSDVVQF…DAVNTASRME (131 aa). The disordered stretch occupies residues 1069-1088; the sequence is SNMRKRENTPSMARSITPEI.

Belongs to the adenylyl cyclase class-4/guanylyl cyclase family. As to expression, expressed in PHA sensory neurons.

It is found in the cell membrane. The catalysed reaction is GTP = 3',5'-cyclic GMP + diphosphate. Its function is as follows. Guanylate cyclase involved in the production of the second messenger cGMP. In Caenorhabditis elegans, this protein is Receptor-type guanylate cyclase gcy-17.